A 526-amino-acid chain; its full sequence is ATP synthase subunit alpha (526 aa).

171–178 (GDRQTGKT) lines the ATP pocket.

Belongs to the ATPase alpha/beta chains family. F-type ATPases have 2 components, CF(1) - the catalytic core - and CF(0) - the membrane proton channel. CF(1) has five subunits: alpha(3), beta(3), gamma(1), delta(1), epsilon(1). CF(0) has four main subunits: a(1), b(1), b'(1) and c(9-12).

The protein localises to the cell inner membrane. The catalysed reaction is ATP + H2O + 4 H(+)(in) = ADP + phosphate + 5 H(+)(out). Its function is as follows. Produces ATP from ADP in the presence of a proton gradient across the membrane. The alpha chain is a regulatory subunit. The polypeptide is ATP synthase subunit alpha (Chlorobium chlorochromatii (strain CaD3)).